Consider the following 393-residue polypeptide: S-adenosylmethionine synthase 2 (393 aa).

Position 9 (Glu9) interacts with Mg(2+). His15 contributes to the ATP binding site. Position 43 (Glu43) interacts with K(+). 2 residues coordinate L-methionine: Glu56 and Gln99. ATP is bound by residues 167–169 (DGK), 235–238 (SGRF), Asp246, 252–253 (RM), Ala269, Lys273, and Lys277. Asp246 contributes to the L-methionine binding site. Lys277 provides a ligand contact to L-methionine.

The protein belongs to the AdoMet synthase family. As to quaternary structure, homotetramer. Mn(2+) serves as cofactor. Mg(2+) is required as a cofactor. It depends on Co(2+) as a cofactor. The cofactor is K(+).

Its subcellular location is the cytoplasm. The catalysed reaction is L-methionine + ATP + H2O = S-adenosyl-L-methionine + phosphate + diphosphate. The protein operates within amino-acid biosynthesis; S-adenosyl-L-methionine biosynthesis; S-adenosyl-L-methionine from L-methionine: step 1/1. Functionally, catalyzes the formation of S-adenosylmethionine from methionine and ATP. The reaction comprises two steps that are both catalyzed by the same enzyme: formation of S-adenosylmethionine (AdoMet) and triphosphate, and subsequent hydrolysis of the triphosphate. The sequence is that of S-adenosylmethionine synthase 2 (SAMS2) from Daucus carota (Wild carrot).